Here is a 652-residue protein sequence, read N- to C-terminus: Putative enzymatic polyprotein (652 aa).

Residues 21–99 (YHGLFDTGAN…SPDIIIGATF (79 aa)) enclose the Peptidase A2 domain. Residue Asp26 is part of the active site. Positions 231-413 (FIEEKTNFED…EKIDFLGVQI (183 aa)) constitute a Reverse transcriptase domain. 3 residues coordinate Mg(2+): Asp301, Asp364, and Asp365.

The catalysed reaction is DNA(n) + a 2'-deoxyribonucleoside 5'-triphosphate = DNA(n+1) + diphosphate. It catalyses the reaction Endonucleolytic cleavage to 5'-phosphomonoester.. Functionally, encodes for at least two polypeptides: protease (PR) and reverse transcriptase (RT). The protease processes the polyprotein in cis. Reverse transcriptase is multifunctional enzyme that converts the viral RNA genome into dsDNA in viral cytoplasmic capsids. This enzyme displays a DNA polymerase activity that can copy either DNA or RNA templates, and a ribonuclease H (RNase H) activity that cleaves the RNA strand of RNA-DNA heteroduplexes in a partially processive 3'- to 5'-endonucleasic mode. Neo-synthesized pregenomic RNA (pgRNA) are encapsidated, and reverse-transcribed inside the nucleocapsid. Partial (+)DNA is synthesized from the (-)DNA template and generates the relaxed circular DNA (RC-DNA) genome. After budding and infection, the RC-DNA migrates in the nucleus, and is converted into a plasmid-like covalently closed circular DNA (cccDNA). This Cassava vein mosaic virus (CsVMV) protein is Putative enzymatic polyprotein.